The following is a 143-amino-acid chain: Transcriptional regulator MraZ (143 aa).

2 consecutive SpoVT-AbrB domains span residues 5–47 and 76–119; these read EYEH…PRGV and AADM…SPRR.

This sequence belongs to the MraZ family. Forms oligomers.

It localises to the cytoplasm. The protein localises to the nucleoid. This Roseiflexus castenholzii (strain DSM 13941 / HLO8) protein is Transcriptional regulator MraZ.